Reading from the N-terminus, the 534-residue chain is Steroid hormone receptor family member cnr14 (534 aa).

Disordered regions lie at residues 30–53 and 119–139; these read SGKT…QWSH and PATS…GHTT. The segment covering 119 to 130 has biased composition (low complexity); sequence PATSVTSSLSPP. A DNA-binding region (nuclear receptor) is located at residues 148–223; sequence ISFCKVCGDK…SGMSKDSVRQ (76 aa). 2 consecutive NR C4-type zinc fingers follow at residues 151–171 and 187–211; these read CKVC…CEGC and CLKQ…FKKC. The NR LBD domain maps to 252–493; the sequence is EVDAVYEAVL…PPLVVEMFQL (242 aa). The interval 502-534 is disordered; it reads HNNQENQYTPAPEHQSPQPQQPTPNQQQTPVHC. Low complexity predominate over residues 511–534; sequence PAPEHQSPQPQQPTPNQQQTPVHC.

This sequence belongs to the nuclear hormone receptor family. NR1 subfamily. Most abundant in embryos.

It localises to the nucleus. Transcriptional regulator which is involved in the sex determination and X chromosome dosage compensation pathways. Directly binds to five 5'-A(G/C)(G/T)(T/G)C(A/G)-3' sites in the promoter of sex-determining factor xol-1 to negatively regulate its expression and promote hermaphrodite development. Together with fox-1 is involved in making the distinction between one and two X-chromosomes. Plays a role in the fox-1-mediated repression of the functionally active isoform (isoform b) of the sex-determining factor xol-1 gene to promote hermaphrodite development. Plays a role in the association of the dosage compensation complex proteins dpy-27 and sdc-3 with the hermaphrodite X chromosomes. The polypeptide is Steroid hormone receptor family member cnr14 (Caenorhabditis elegans).